The following is a 508-amino-acid chain: Photosystem II CP47 reaction center protein (508 aa).

Transmembrane regions (helical) follow at residues S21–S36, I101–W115, G140–F156, I203–S218, V237–V252, and S457–R472.

Belongs to the PsbB/PsbC family. PsbB subfamily. As to quaternary structure, PSII is composed of 1 copy each of membrane proteins PsbA, PsbB, PsbC, PsbD, PsbE, PsbF, PsbH, PsbI, PsbJ, PsbK, PsbL, PsbM, PsbT, PsbX, PsbY, PsbZ, Psb30/Ycf12, at least 3 peripheral proteins of the oxygen-evolving complex and a large number of cofactors. It forms dimeric complexes. Binds multiple chlorophylls. PSII binds additional chlorophylls, carotenoids and specific lipids. serves as cofactor.

It localises to the plastid. It is found in the chloroplast thylakoid membrane. In terms of biological role, one of the components of the core complex of photosystem II (PSII). It binds chlorophyll and helps catalyze the primary light-induced photochemical processes of PSII. PSII is a light-driven water:plastoquinone oxidoreductase, using light energy to abstract electrons from H(2)O, generating O(2) and a proton gradient subsequently used for ATP formation. The polypeptide is Photosystem II CP47 reaction center protein (Phaseolus vulgaris (Kidney bean)).